The sequence spans 357 residues: DNA polymerase IV (357 aa).

In terms of domain architecture, UmuC spans 4–185 (IIHCDCDCFY…LPVERLFGVG (182 aa)). Mg(2+)-binding residues include Asp8 and Asp103. Glu104 is a catalytic residue.

This sequence belongs to the DNA polymerase type-Y family. As to quaternary structure, monomer. Requires Mg(2+) as cofactor.

The protein resides in the cytoplasm. It catalyses the reaction DNA(n) + a 2'-deoxyribonucleoside 5'-triphosphate = DNA(n+1) + diphosphate. Its function is as follows. Poorly processive, error-prone DNA polymerase involved in untargeted mutagenesis. Copies undamaged DNA at stalled replication forks, which arise in vivo from mismatched or misaligned primer ends. These misaligned primers can be extended by PolIV. Exhibits no 3'-5' exonuclease (proofreading) activity. May be involved in translesional synthesis, in conjunction with the beta clamp from PolIII. The protein is DNA polymerase IV of Ralstonia nicotianae (strain ATCC BAA-1114 / GMI1000) (Ralstonia solanacearum).